Here is a 1463-residue protein sequence, read N- to C-terminus: Kinesin-like protein KIF15 (1463 aa).

The Kinesin motor domain maps to 18–354; sequence AIKVFVRVRP…LKFARRAKMI (337 aa). Position 99 to 106 (99 to 106) interacts with ATP; that stretch reads GQTGSGKT. Positions 387–424 are disordered; it reads AEGSIPRGPSESGDSQMSNSSTESNGPVSGQQSGSSSS. Polar residues predominate over residues 398–414; it reads SGDSQMSNSSTESNGPV. Residues 415–424 are compositionally biased toward low complexity; sequence SGQQSGSSSS. 2 coiled-coil regions span residues 436–517 and 586–646; these read SLRD…LEHN and TSTL…QGMK. 3 disordered regions span residues 686–720, 1335–1356, and 1409–1444; these read AGEE…SGDI, FKEK…SKLT, and QLGK…EAGA. A compositionally biased stretch (polar residues) spans 701–715; that stretch reads DNGSPLRSHSTNSLP. A compositionally biased stretch (basic and acidic residues) spans 1418 to 1428; the sequence is EQMKRDYEALQ.

This sequence belongs to the TRAFAC class myosin-kinesin ATPase superfamily. Kinesin family. KLP2 subfamily. In terms of assembly, homodimer.

It is found in the cytoplasm. It localises to the cytoskeleton. The protein resides in the spindle. Functionally, plus-end directed kinesin-like motor enzyme involved in mitotic spindle assembly. Plays a role in positioning spindle poles during mitosis, specifically at prometaphase. The sequence is that of Kinesin-like protein KIF15 (KIF15) from Strongylocentrotus purpuratus (Purple sea urchin).